Reading from the N-terminus, the 265-residue chain is tRNA pseudouridine synthase A (265 aa).

Asp58 (nucleophile) is an active-site residue. Tyr116 contributes to the substrate binding site.

The protein belongs to the tRNA pseudouridine synthase TruA family. Homodimer.

It catalyses the reaction uridine(38/39/40) in tRNA = pseudouridine(38/39/40) in tRNA. Functionally, formation of pseudouridine at positions 38, 39 and 40 in the anticodon stem and loop of transfer RNAs. The protein is tRNA pseudouridine synthase A of Neisseria gonorrhoeae (strain ATCC 700825 / FA 1090).